Reading from the N-terminus, the 265-residue chain is MACVASSTTLISSPSSRVFPAKSSLSSPSVSFLRTLSSPSASASLRSGFARRSSLSSTSRRSFAVKAQADDLPLVGNKAPDFEAEAVFDQEFIKVKLSDYIGKKYVILFFYPLDFTFVCPTEITAFSDRHSEFEKLNTEVLGVSVDSVFSHLAWVQTDRKSGGLGDLNYPLISDVTKSISKSFGVLIHDQGIALRGLFIIDKEGVIQHSTINNLGIGRSVDETMRTLQALQYTGNPDEVCPAGWKPGEKSMKPDPKLSKEYFSAI.

Residues 1–65 constitute a chloroplast transit peptide; the sequence is MACVASSTTL…SSTSRRSFAV (65 aa). In terms of domain architecture, Thioredoxin spans 73–232; that stretch reads PLVGNKAPDF…TMRTLQALQY (160 aa). Cysteine 119 acts as the Cysteine sulfenic acid (-SOH) intermediate in catalysis.

The protein belongs to the peroxiredoxin family. AhpC/Prx1 subfamily. In terms of assembly, homodimer; disulfide-linked, upon oxidation.

The protein localises to the plastid. It is found in the chloroplast. The catalysed reaction is a hydroperoxide + [thioredoxin]-dithiol = an alcohol + [thioredoxin]-disulfide + H2O. Thiol-specific peroxidase that catalyzes the reduction of hydrogen peroxide and organic hydroperoxides to water and alcohols, respectively. Plays a role in cell protection against oxidative stress by detoxifying peroxides. May be an antioxidant enzyme particularly in the developing shoot and photosynthesizing leaf. The chain is 2-Cys peroxiredoxin BAS1, chloroplastic (BAS1) from Spinacia oleracea (Spinach).